The sequence spans 533 residues: Retinoid isomerohydrolase (533 aa).

The residue at position 2 (Ser2) is an N-acetylserine. Thr101 and Thr105 each carry phosphothreonine. Residue Cys112 is the site of S-palmitoyl cysteine; in membrane form attachment. Position 113 is an N6-acetyllysine (Lys113). A Phosphoserine modification is found at Ser117. Position 180 (His180) interacts with Fe cation. Cys231 carries S-palmitoyl cysteine; in membrane form lipidation. Residues His241 and His313 each contribute to the Fe cation site. S-palmitoyl cysteine; in membrane form attachment occurs at residues Cys329 and Cys330. His527 serves as a coordination point for Fe cation.

The protein belongs to the carotenoid oxygenase family. Interacts with MYO7A; this mediates light-dependent intracellular transport of RPE65. Fe(2+) is required as a cofactor. Palmitoylation by LRAT regulates ligand binding specificity; the palmitoylated form (membrane form) specifically binds all-trans-retinyl-palmitate, while the soluble unpalmitoylated form binds all-trans-retinol (vitamin A). As to expression, retinal pigment epithelium specific.

It is found in the cytoplasm. It localises to the cell membrane. Its subcellular location is the microsome membrane. It carries out the reaction an all-trans-retinyl ester + H2O = 11-cis-retinol + a fatty acid + H(+). It catalyses the reaction lutein = (3R,3'S)-zeaxanthin. The enzyme catalyses all-trans-retinyl hexadecanoate + H2O = 11-cis-retinol + hexadecanoate + H(+). Critical isomerohydrolase in the retinoid cycle involved in regeneration of 11-cis-retinal, the chromophore of rod and cone opsins. Catalyzes the cleavage and isomerization of all-trans-retinyl fatty acid esters to 11-cis-retinol which is further oxidized by 11-cis retinol dehydrogenase to 11-cis-retinal for use as visual chromophore. Essential for the production of 11-cis retinal for both rod and cone photoreceptors. Also capable of catalyzing the isomerization of lutein to meso-zeaxanthin an eye-specific carotenoid. The soluble form binds vitamin A (all-trans-retinol), making it available for LRAT processing to all-trans-retinyl ester. The membrane form, palmitoylated by LRAT, binds all-trans-retinyl esters, making them available for IMH (isomerohydrolase) processing to all-cis-retinol. The soluble form is regenerated by transferring its palmitoyl groups onto 11-cis-retinol, a reaction catalyzed by LRAT. The protein is Retinoid isomerohydrolase (RPE65) of Chlorocebus aethiops (Green monkey).